A 141-amino-acid polypeptide reads, in one-letter code: Hemoglobin subunit alpha (141 aa).

Residues 1-141 enclose the Globin domain; that stretch reads VLSPADKTNI…VSTVLVSKYR (141 aa). A Phosphoserine modification is found at serine 3. N6-succinyllysine is present on lysine 7. Threonine 8 is subject to Phosphothreonine. Lysine 11 is modified (N6-succinyllysine). Lysine 16 carries the N6-acetyllysine; alternate modification. At lysine 16 the chain carries N6-succinyllysine; alternate. Tyrosine 24 carries the post-translational modification Phosphotyrosine. The residue at position 35 (serine 35) is a Phosphoserine. Lysine 40 carries the N6-succinyllysine modification. A Phosphoserine modification is found at serine 49. Histidine 58 provides a ligand contact to O2. Residue histidine 87 coordinates heme b. Position 102 is a phosphoserine (serine 102). The residue at position 108 (threonine 108) is a Phosphothreonine. Residues serine 124 and serine 131 each carry the phosphoserine modification. Phosphothreonine is present on threonine 134. Position 138 is a phosphoserine (serine 138).

Belongs to the globin family. Heterotetramer of two alpha chains and two beta chains. In terms of tissue distribution, red blood cells.

Involved in oxygen transport from the lung to the various peripheral tissues. In terms of biological role, hemopressin acts as an antagonist peptide of the cannabinoid receptor CNR1. Hemopressin-binding efficiently blocks cannabinoid receptor CNR1 and subsequent signaling. This is Hemoglobin subunit alpha (HBA) from Myotis velifer (Mouse-eared bat).